The chain runs to 292 residues: Acidic endochitinase (292 aa).

The signal sequence occupies residues 1–25 (MAAHKITTTLSIFFLLSSIFRSSDA). A GH18 domain is found at 26 to 292 (AGIAIYWGQN…YSDSIKGSIG (267 aa)). Cystine bridges form between Cys45-Cys92 and Cys75-Cys82. Catalysis depends on Glu152, which acts as the Proton donor. Cys180 and Cys209 are oxidised to a cystine.

The protein belongs to the glycosyl hydrolase 18 family. Chitinase class II subfamily.

The protein resides in the secreted. It localises to the extracellular space. The enzyme catalyses Random endo-hydrolysis of N-acetyl-beta-D-glucosaminide (1-&gt;4)-beta-linkages in chitin and chitodextrins.. Its function is as follows. This protein functions as a defense against chitin containing fungal pathogens. The protein is Acidic endochitinase of Cucumis sativus (Cucumber).